Reading from the N-terminus, the 236-residue chain is Small ribosomal subunit protein eS6 (236 aa).

The protein belongs to the eukaryotic ribosomal protein eS6 family. In terms of assembly, component of the small ribosomal subunit. Mature ribosomes consist of a small (40S) and a large (60S) subunit. The 40S subunit contains about 32 different proteins and 1 molecule of RNA (18S). The 60S subunit contains 45 different proteins and 3 molecules of RNA (25S, 5.8S and 5S).

It localises to the cytoplasm. Functionally, component of the ribosome, a large ribonucleoprotein complex responsible for the synthesis of proteins in the cell. The small ribosomal subunit (SSU) binds messenger RNAs (mRNAs) and translates the encoded message by selecting cognate aminoacyl-transfer RNA (tRNA) molecules. The large subunit (LSU) contains the ribosomal catalytic site termed the peptidyl transferase center (PTC), which catalyzes the formation of peptide bonds, thereby polymerizing the amino acids delivered by tRNAs into a polypeptide chain. The nascent polypeptides leave the ribosome through a tunnel in the LSU and interact with protein factors that function in enzymatic processing, targeting, and the membrane insertion of nascent chains at the exit of the ribosomal tunnel. RPS6A is involved in nucleolar processing of pre-18S ribosomal RNA and ribosome assembly. The chain is Small ribosomal subunit protein eS6 (RPS6A) from Candida albicans (strain SC5314 / ATCC MYA-2876) (Yeast).